Reading from the N-terminus, the 358-residue chain is Adenosine deaminase (358 aa).

2 residues coordinate Zn(2+): His-14 and His-16. His-16, Asp-18, and Gly-183 together coordinate substrate. His-212 lines the Zn(2+) pocket. The active-site Proton donor is Glu-215. Asp-294 provides a ligand contact to Zn(2+). Asp-295 contributes to the substrate binding site.

The protein belongs to the metallo-dependent hydrolases superfamily. Adenosine and AMP deaminases family. Zn(2+) is required as a cofactor.

The protein localises to the cell membrane. It is found in the cell junction. It localises to the cytoplasmic vesicle lumen. The protein resides in the cytoplasm. Its subcellular location is the lysosome. The catalysed reaction is adenosine + H2O + H(+) = inosine + NH4(+). The enzyme catalyses 2'-deoxyadenosine + H2O + H(+) = 2'-deoxyinosine + NH4(+). Catalyzes the hydrolytic deamination of adenosine and 2-deoxyadenosine. Plays an important role in purine metabolism and in adenosine homeostasis. Modulates signaling by extracellular adenosine, and so contributes indirectly to cellular signaling events. May act as a positive regulator of T-cell coactivation. In Xenopus tropicalis (Western clawed frog), this protein is Adenosine deaminase (ada).